The following is a 463-amino-acid chain: Protein translocase subunit SecY (463 aa).

Topologically, residues 1–20 are cytoplasmic; that stretch reads MGFMDFLAKMGENLPAVSKP. The chain crosses the membrane as a helical span at residues 21–47; the sequence is KDKPTLTRKLLWTFIGLIVYLLMASIP. Topologically, residues 48 to 60 are extracellular; it reads LYGVTSSNSFLSN. Positions 61–68 form an intramembrane region, helical; sequence FLAQQIIF. The discontinuously helical transmembrane segment at 61 to 89 threads the bilayer; it reads FLAQQIIFASSQGTLAQLGIGPVITSGLI. An intramembrane segment occupies 69 to 80; sequence ASSQGTLAQLGI. The helical intramembrane region spans 81–89; it reads GPVITSGLI. Residues 90–110 lie on the Cytoplasmic side of the membrane; sequence MQILVGSKLINVDLTTQEGKS. Residues 111–134 form a helical membrane-spanning segment; that stretch reads KFTQAEKALALIFIIVESSLFGYV. Residues 135–142 lie on the Extracellular side of the membrane; it reads FTRATSNI. The helical transmembrane segment at 143–167 threads the bilayer; it reads LLPIIVVVQLIIASYIILLLDEMIQ. At 168–174 the chain is on the cytoplasmic side; sequence KGWGLGS. Residues 175–193 traverse the membrane as a helical segment; that stretch reads GVSLFIMAGIMKVIFWNMF. Over 194-236 the chain is Extracellular; sequence GIVSVQSQNLPVGFFPLLVSYITSGRNLQEIVLNTSSTTPYQP. The chain crosses the membrane as a helical span at residues 237-258; sequence DLIGLIATVGLTILIVYLVNTN. Topologically, residues 259 to 283 are cytoplasmic; it reads IYIPVTTQRLRGIRTTVPLNFLYVS. The helical transmembrane segment at 284-305 threads the bilayer; it reads SIPVIFVSVLGADIQLFASLAN. Residues 306–341 lie on the Extracellular side of the membrane; the sequence is SISNSASGILTDIANAFFFPPQGVPHSVYALVVDPV. The chain crosses the membrane as a helical span at residues 342–361; it reads GAAIYAAVFIVLSIVFGMLW. Over 362 to 404 the chain is Cytoplasmic; that stretch reads IDVAGLDPKTQAEQMIRSGIEIPGMRTNPRIIEGILSKYIYAL. A helical membrane pass occupies residues 405–423; the sequence is GFFSSLIVGLIAVVATFLG. The Extracellular portion of the chain corresponds to 424-426; sequence TYG. The helical transmembrane segment at 427–441 threads the bilayer; it reads TGVGLLLAITIAMQY. The Cytoplasmic portion of the chain corresponds to 442–463; sequence YNLLAYERTLEMYPLLKRIVGE.

This sequence belongs to the SecY/SEC61-alpha family. In terms of assembly, component of the Sec protein translocase complex. Heterotrimer consisting of alpha (SecY), beta (SecG) and gamma (SecE) subunits. The heterotrimers can form oligomers, although 1 heterotrimer is thought to be able to translocate proteins. Interacts with the ribosome. May interact with SecDF, and other proteins may be involved.

Its subcellular location is the cell membrane. The central subunit of the protein translocation channel SecYEG. Consists of two halves formed by TMs 1-5 and 6-10. These two domains form a lateral gate at the front which open onto the bilayer between TMs 2 and 7, and are clamped together by SecE at the back. The channel is closed by both a pore ring composed of hydrophobic SecY resides and a short helix (helix 2A) on the extracellular side of the membrane which forms a plug. The plug probably moves laterally to allow the channel to open. The ring and the pore may move independently. In Sulfolobus acidocaldarius (strain ATCC 33909 / DSM 639 / JCM 8929 / NBRC 15157 / NCIMB 11770), this protein is Protein translocase subunit SecY.